The sequence spans 337 residues: GTP 3',8-cyclase (337 aa).

The Radical SAM core domain maps to 17–242; sequence AFQRRYYYLR…QSKGLLDGPA (226 aa). Residue R26 coordinates GTP. Residues C33 and C37 each coordinate [4Fe-4S] cluster. Y39 provides a ligand contact to S-adenosyl-L-methionine. Position 40 (C40) interacts with [4Fe-4S] cluster. R76 provides a ligand contact to GTP. Position 80 (G80) interacts with S-adenosyl-L-methionine. A GTP-binding site is contributed by T107. S-adenosyl-L-methionine is bound at residue S131. K168 serves as a coordination point for GTP. An S-adenosyl-L-methionine-binding site is contributed by M202. 2 residues coordinate [4Fe-4S] cluster: C265 and C268. 270 to 272 lines the GTP pocket; sequence RLR. C282 contacts [4Fe-4S] cluster.

The protein belongs to the radical SAM superfamily. MoaA family. Monomer and homodimer. Requires [4Fe-4S] cluster as cofactor.

The catalysed reaction is GTP + AH2 + S-adenosyl-L-methionine = (8S)-3',8-cyclo-7,8-dihydroguanosine 5'-triphosphate + 5'-deoxyadenosine + L-methionine + A + H(+). It functions in the pathway cofactor biosynthesis; molybdopterin biosynthesis. Catalyzes the cyclization of GTP to (8S)-3',8-cyclo-7,8-dihydroguanosine 5'-triphosphate. This Pasteurella multocida (strain Pm70) protein is GTP 3',8-cyclase.